Consider the following 406-residue polypeptide: Phosphatidylinositol 5-phosphate 4-kinase type-2 alpha (406 aa).

A2 bears the N-acetylalanine mark. T3 is modified (phosphothreonine). S14 carries the post-translational modification Phosphoserine. Residues 33–405 (ASDPLLSVLM…RFLDFIGHIL (373 aa)) enclose the PIPK domain. The tract at residues 59 to 65 (VMLMPDD) is required for interaction with PIP5K1A. N6-acetyllysine occurs at positions 89 and 145. The disordered stretch occupies residues 288–329 (QEEVECEENDGEEEGESDGTHPVGTPPDSPGNTLNSSPPLAP). The segment covering 289 to 304 (EEVECEENDGEEEGES) has biased composition (acidic residues).

As to quaternary structure, homodimer. Interacts with PIP4K2B; the interaction may regulate localization to the nucleus. Probably interacts with PIP5K1A; the interaction inhibits PIP5K1A kinase activity. Post-translationally, phosphorylated in tyrosines. Phosphorylation is induced by light and increases kinase activity. Expressed ubiquitously, with high levels in the brain. Present in most tissues, except notably skeletal muscle and small intestine.

The protein resides in the cell membrane. The protein localises to the nucleus. It localises to the lysosome. Its subcellular location is the cytoplasm. It is found in the photoreceptor inner segment. The protein resides in the cell projection. The protein localises to the cilium. It localises to the photoreceptor outer segment. The catalysed reaction is a 1,2-diacyl-sn-glycero-3-phospho-(1D-myo-inositol-5-phosphate) + ATP = a 1,2-diacyl-sn-glycero-3-phospho-(1D-myo-inositol-4,5-bisphosphate) + ADP + H(+). The enzyme catalyses 1,2-dihexadecanoyl-sn-glycero-3-phospho-(1D-myo-inositol-5-phosphate) + ATP = 1,2-dihexadecanoyl-sn-glycero-3-phospho-(1D-myo-inositol-4,5-bisphosphate) + ADP + H(+). It catalyses the reaction 1,2-dihexadecanoyl-sn-glycero-3-phospho-(1D-myo-inositol-5-phosphate) + GTP = 1,2-dihexadecanoyl-sn-glycero-3-phospho-(1D-myo-inositol-4,5-bisphosphate) + GDP + H(+). Its activity is regulated as follows. In rod outer segments, activated by light. Inhibited by I-OMe tyrphostin AG-538 (I-OMe-AG-538), acting as an ATP-competitive inhibitor. Catalyzes the phosphorylation of phosphatidylinositol 5-phosphate (PtdIns5P) on the fourth hydroxyl of the myo-inositol ring, to form phosphatidylinositol 4,5-bisphosphate (PtdIns(4,5)P2). Has both ATP- and GTP-dependent kinase activities. May exert its function by regulating the levels of PtdIns5P, which functions in the cytosol by increasing AKT activity and in the nucleus signals through ING2. May regulate the pool of cytosolic PtdIns5P in response to the activation of tyrosine phosphorylation. Required for lysosome-peroxisome membrane contacts and intracellular cholesterol transport through modulating peroxisomal PtdIns(4,5)P2 level. In collaboration with PIP4K2B, has a role in mediating autophagy in times of nutrient stress. Required for autophagosome-lysosome fusion and the regulation of cellular lipid metabolism. May be involved in thrombopoiesis, and the terminal maturation of megakaryocytes and regulation of their size. Negatively regulates insulin signaling through a catalytic-independent mechanism. PIP4Ks interact with PIP5Ks and suppress PIP5K-mediated PtdIns(4,5)P2 synthesis and insulin-dependent conversion to PtdIns(3,4,5)P3. The protein is Phosphatidylinositol 5-phosphate 4-kinase type-2 alpha of Homo sapiens (Human).